The following is a 539-amino-acid chain: CTP synthase (539 aa).

The segment at 1–268 (MSFKCIFLTG…STFITEKLGL (268 aa)) is amidoligase domain. CTP is bound at residue Ser14. Ser14 provides a ligand contact to UTP. 15–20 (SLGKGL) serves as a coordination point for ATP. Tyr55 is a binding site for L-glutamine. Residue Asp72 coordinates ATP. Residues Asp72 and Glu142 each coordinate Mg(2+). CTP contacts are provided by residues 149–151 (DIE), 188–193 (KTKPTQ), and Lys224. UTP contacts are provided by residues 188 to 193 (KTKPTQ) and Lys224. One can recognise a Glutamine amidotransferase type-1 domain in the interval 294–533 (RIGLVGKYVQ…IQAAILYSRN (240 aa)). Gly353 lines the L-glutamine pocket. The active-site Nucleophile; for glutamine hydrolysis is Cys380. L-glutamine contacts are provided by residues 381–384 (LGMQ), Glu404, and Arg461. Active-site residues include His506 and Glu508.

This sequence belongs to the CTP synthase family. Homotetramer.

It carries out the reaction UTP + L-glutamine + ATP + H2O = CTP + L-glutamate + ADP + phosphate + 2 H(+). The enzyme catalyses L-glutamine + H2O = L-glutamate + NH4(+). The catalysed reaction is UTP + NH4(+) + ATP = CTP + ADP + phosphate + 2 H(+). It functions in the pathway pyrimidine metabolism; CTP biosynthesis via de novo pathway; CTP from UDP: step 2/2. With respect to regulation, allosterically activated by GTP, when glutamine is the substrate; GTP has no effect on the reaction when ammonia is the substrate. The allosteric effector GTP functions by stabilizing the protein conformation that binds the tetrahedral intermediate(s) formed during glutamine hydrolysis. Inhibited by the product CTP, via allosteric rather than competitive inhibition. Its function is as follows. Catalyzes the ATP-dependent amination of UTP to CTP with either L-glutamine or ammonia as the source of nitrogen. Regulates intracellular CTP levels through interactions with the four ribonucleotide triphosphates. This Chlamydia felis (strain Fe/C-56) (Chlamydophila felis) protein is CTP synthase.